The following is a 437-amino-acid chain: Putrescine hydroxycinnamoyltransferase 3 (437 aa).

Catalysis depends on proton acceptor residues His-151 and Asp-383.

It belongs to the plant acyltransferase family. Highly expressed in roots. Expressed at low levels in shoots and flowers.

Functionally, hydroxycinnamoyl transferase that catalyzes the transfer of an acyl from p-coumaryol-CoA to putrescine, to produce coumaroyl putrescine. Can use feruloyl-CoA and caffeoyl-CoA as acyl donors. This chain is Putrescine hydroxycinnamoyltransferase 3, found in Oryza sativa subsp. japonica (Rice).